A 490-amino-acid polypeptide reads, in one-letter code: Ribulose bisphosphate carboxylase large chain (490 aa).

Substrate contacts are provided by asparagine 127 and threonine 177. The active-site Proton acceptor is the lysine 179. Lysine 181 lines the substrate pocket. Positions 205, 207, and 208 each coordinate Mg(2+). Lysine 205 is modified (N6-carboxylysine). Residue histidine 297 is the Proton acceptor of the active site. Residues arginine 298, histidine 330, and serine 382 each coordinate substrate.

This sequence belongs to the RuBisCO large chain family. Type I subfamily. As to quaternary structure, heterohexadecamer of 8 large chains and 8 small chains. Mg(2+) serves as cofactor.

Its subcellular location is the plastid. It localises to the chloroplast. It catalyses the reaction 2 (2R)-3-phosphoglycerate + 2 H(+) = D-ribulose 1,5-bisphosphate + CO2 + H2O. It carries out the reaction D-ribulose 1,5-bisphosphate + O2 = 2-phosphoglycolate + (2R)-3-phosphoglycerate + 2 H(+). RuBisCO catalyzes two reactions: the carboxylation of D-ribulose 1,5-bisphosphate, the primary event in carbon dioxide fixation, as well as the oxidative fragmentation of the pentose substrate in the photorespiration process. Both reactions occur simultaneously and in competition at the same active site. The sequence is that of Ribulose bisphosphate carboxylase large chain from Detonula confervacea (Marine diatom).